The sequence spans 318 residues: Probable arabinan endo-1,5-alpha-L-arabinosidase C (318 aa).

The signal sequence occupies residues 1–28; sequence MLSFVLLLCVALVNAYSDPGACSGTCWA. The active-site Proton acceptor is Asp-30. 3 N-linked (GlcNAc...) asparagine glycosylation sites follow: Asn-72, Asn-80, and Asn-188. The active-site Proton donor is Glu-196. N-linked (GlcNAc...) asparagine glycosylation occurs at Asn-277.

Belongs to the glycosyl hydrolase 43 family.

It localises to the secreted. The enzyme catalyses Endohydrolysis of (1-&gt;5)-alpha-arabinofuranosidic linkages in (1-&gt;5)-arabinans.. It functions in the pathway glycan metabolism; L-arabinan degradation. Functionally, endo-1,5-alpha-L-arabinanase involved in degradation of pectin. Its preferred substrate is linear 1,5-alpha-L-arabinan. In Aspergillus niger (strain ATCC MYA-4892 / CBS 513.88 / FGSC A1513), this protein is Probable arabinan endo-1,5-alpha-L-arabinosidase C (abnC).